A 30-amino-acid polypeptide reads, in one-letter code: Trypsin inhibitor 6 (30 aa).

3 disulfides stabilise this stretch: cysteine 4/cysteine 21, cysteine 11/cysteine 23, and cysteine 17/cysteine 29.

This sequence belongs to the protease inhibitor I7 (squash-type serine protease inhibitor) family.

The protein localises to the secreted. In terms of biological role, strongly inhibits trypsin, weakly inhibits chymotrypsin. This chain is Trypsin inhibitor 6, found in Cyclanthera pedata (Achocha).